We begin with the raw amino-acid sequence, 348 residues long: Flagellar P-ring protein (348 aa).

The signal sequence occupies residues 1-24 (MRRKNNNKIWIWVATLILSISALY).

This sequence belongs to the FlgI family. In terms of assembly, the basal body constitutes a major portion of the flagellar organelle and consists of four rings (L,P,S, and M) mounted on a central rod.

The protein localises to the periplasm. Its subcellular location is the bacterial flagellum basal body. Assembles around the rod to form the L-ring and probably protects the motor/basal body from shearing forces during rotation. The polypeptide is Flagellar P-ring protein (Helicobacter hepaticus (strain ATCC 51449 / 3B1)).